Consider the following 170-residue polypeptide: Cathelicidin antimicrobial peptide (170 aa).

The signal sequence occupies residues 1–30 (MKTQRDSPSLGRWSLVLLLLGLVMPLAIVA). Positions 31–131 (QVLSYQEAVL…DISCDKDNRR (101 aa)) are cleaved as a propeptide — cathelin-like domain (CLD). 2 disulfide bridges follow: Cys86/Cys97 and Cys108/Cys125. The tract at residues 150 to 162 (LKKVGQKIKDFLG) is active core.

This sequence belongs to the cathelicidin family. As to quaternary structure, monomer, homodimer or homotrimer (in vitro). Oligomerizes as tetra- or hexamer in solution (in vitro). Proteolytically cleaved by proteinase PRTN3 into antibacterial peptide LL-37. Proteolytically cleaved by cathepsin CTSG and neutrophil elastase ELANE. Post-translationally, resistant to proteolytic degradation in solution, and when bound to both zwitterionic (mimicking mammalian membranes) and negatively charged membranes (mimicking bacterial membranes). In terms of processing, after secretion onto the skin surface, the CAMP gene product is processed by a serine protease-dependent mechanism into multiple novel antimicrobial peptides distinct from and shorter than cathelicidin LL-37. These peptides show enhanced antimicrobial action, acquiring the ability to kill skin pathogens such as S.aureus, E.coli and C.albicans. These peptides have lost the ability to stimulate CXCL8/IL8 release from keratinocytes. The peptides act synergistically, killing bacteria at lower concentrations when present together, and maintain activity at increased salt condition.

Its subcellular location is the secreted. It localises to the vesicle. Functionally, antimicrobial protein that is an integral component of the innate immune system. Binds to bacterial lipopolysaccharides (LPS). Acts via neutrophil N-formyl peptide receptors to enhance the release of CXCL2. Postsecretory processing generates multiple cathelicidin antimicrobial peptides with various lengths which act as a topical antimicrobial defense in sweat on skin. The unprocessed precursor form, cathelicidin antimicrobial peptide, inhibits the growth of Gram-negative E.coli and E.aerogenes with efficiencies comparable to that of the mature peptide LL-37 (in vitro). Its function is as follows. Antimicrobial peptide that is an integral component of the innate immune system. Binds to bacterial lipopolysaccharides (LPS). Causes membrane permeabilization by forming transmembrane pores (in vitro). Causes lysis of E.coli. Exhibits antimicrobial activity against Gram-negative bacteria such as P.aeruginosa, S.typhimurium, E.aerogenes, E.coli and P.syringae, Gram-positive bacteria such as L.monocytogenes, S.epidermidis, S.pyogenes and S.aureus, as well as vancomycin-resistant enterococci (in vitro). Exhibits antimicrobial activity against methicillin-resistant S.aureus, P.mirabilis, and C.albicans in low-salt media, but not in media containing 100 mM NaCl (in vitro). Forms chiral supramolecular assemblies with quinolone signal (PQS) molecules of P.aeruginosa, which may lead to interference of bacterial quorum signaling and perturbance of bacterial biofilm formation. May form supramolecular fiber-like assemblies on bacterial membranes. Induces cytokine and chemokine producation as well as TNF/TNFA and CSF2/GMCSF production in normal human keratinocytes. Exhibits hemolytic activity against red blood cells. Exhibits antimicrobial activity against E.coli and B.megaterium (in vitro). This chain is Cathelicidin antimicrobial peptide, found in Macaca fascicularis (Crab-eating macaque).